Consider the following 276-residue polypeptide: Digeranylgeranylglyceryl phosphate synthase (276 aa).

5 consecutive transmembrane segments (helical) span residues 14–34 (VNTL…GGAV), 90–110 (VVLF…AVCI), 144–164 (FVFG…AALA), 200–220 (ALAV…VPYL), and 221–241 (VGVF…VMVV).

It belongs to the UbiA prenyltransferase family. DGGGP synthase subfamily. The cofactor is Mg(2+).

Its subcellular location is the cell membrane. The catalysed reaction is sn-3-O-(geranylgeranyl)glycerol 1-phosphate + (2E,6E,10E)-geranylgeranyl diphosphate = 2,3-bis-O-(geranylgeranyl)-sn-glycerol 1-phosphate + diphosphate. It participates in membrane lipid metabolism; glycerophospholipid metabolism. Prenyltransferase that catalyzes the transfer of the geranylgeranyl moiety of geranylgeranyl diphosphate (GGPP) to the C2 hydroxyl of (S)-3-O-geranylgeranylglyceryl phosphate (GGGP). This reaction is the second ether-bond-formation step in the biosynthesis of archaeal membrane lipids. This Halobacterium salinarum (strain ATCC 29341 / DSM 671 / R1) protein is Digeranylgeranylglyceryl phosphate synthase.